Reading from the N-terminus, the 830-residue chain is Outer dense fiber protein 2 (830 aa).

A phosphoserine mark is found at Ser73 and Ser74. Thr92 carries the post-translational modification Phosphothreonine. Ser95 bears the Phosphoserine; by TSSK4 mark. Phosphoserine is present on residues Ser106 and Ser109. Thr110 is subject to Phosphothreonine. A phosphoserine mark is found at Ser115 and Ser129. A Glycyl lysine isopeptide (Lys-Gly) (interchain with G-Cter in SUMO2) cross-link involves residue Lys138. Residue Ser139 is modified to Phosphoserine. The stretch at 144–217 forms a coiled coil; that stretch reads QKGERQMAKR…MSKLVEAEMD (74 aa). Thr231 bears the Phosphothreonine mark. Coiled-coil stretches lie at residues 245–423 and 461–798; these read DINT…AEQL and EIIV…NYVQ. Phosphoserine occurs at positions 261 and 632. Residues 537-701 form an interaction with BBOF1 region; it reads KNYEGMIDNY…EAIHQAQLRL (165 aa).

It belongs to the ODF2 family. In terms of assembly, self-associates. Associates with microtubules and forms a fibrillar structure partially linked to the microtubule network. Interacts via its C-terminus with PLK1. Interacts with ODF1. Interacts with MARK4; the interaction is required for localization of ODF2 to centrioles. Interacts with TSSK4. Interacts with AKNA. Interacts with CFAP58. Interacts with BBOF1. Interacts with CCDC38. Interacts with CCDC42. In terms of processing, tyrosine phosphorylated. Phosphorylated on Ser-95 by TSSK4. In terms of tissue distribution, testis-specific (at protein level). Expressed in spermatids at tubular stage V of the spermatogenic cycle. Highly expressed in the cytoplasm of elongating spermatids (tubular stages X/XI). In step 14/15 spermatids of tubular stage III/IV low expression detected. No expression detected in other testicular cells as well as the early round of spermatids.

It localises to the cytoplasm. It is found in the cytoskeleton. The protein localises to the microtubule organizing center. Its subcellular location is the centrosome. The protein resides in the cell projection. It localises to the cilium. It is found in the centriole. The protein localises to the spindle pole. Its subcellular location is the flagellum. Its function is as follows. Seems to be a major component of sperm tail outer dense fibers (ODF). ODFs are filamentous structures located on the outside of the axoneme in the midpiece and principal piece of the mammalian sperm tail and may help to maintain the passive elastic structures and elastic recoil of the sperm tail. May have a modulating influence on sperm motility. Functions as a general scaffold protein that is specifically localized at the distal/subdistal appendages of mother centrioles. Component of the centrosome matrix required for the localization of PLK1 and NIN to the centrosomes. Required for the formation and/or maintenance of normal CETN1 assembly. The chain is Outer dense fiber protein 2 (Odf2) from Mus musculus (Mouse).